Here is a 256-residue protein sequence, read N- to C-terminus: Spore coat polysaccharide biosynthesis protein SpsA (256 aa).

The cysteines at positions 155 and 243 are disulfide-linked. The active site involves Asp191.

Belongs to the glycosyltransferase 2 family. In terms of assembly, monomer in solution.

It participates in spore coat biogenesis; spore coat polysaccharide biosynthesis. Glycosyltransferase implicated in the synthesis of the spore coat. In Bacillus subtilis (strain 168), this protein is Spore coat polysaccharide biosynthesis protein SpsA (spsA).